The sequence spans 155 residues: 6,7-dimethyl-8-ribityllumazine synthase (155 aa).

Residues phenylalanine 24, 58–60 (AFE), and 82–84 (VII) each bind 5-amino-6-(D-ribitylamino)uracil. Position 87–88 (87–88 (ST)) interacts with (2S)-2-hydroxy-3-oxobutyl phosphate. Histidine 90 functions as the Proton donor in the catalytic mechanism. Phenylalanine 115 serves as a coordination point for 5-amino-6-(D-ribitylamino)uracil. Position 129 (arginine 129) interacts with (2S)-2-hydroxy-3-oxobutyl phosphate.

It belongs to the DMRL synthase family.

The enzyme catalyses (2S)-2-hydroxy-3-oxobutyl phosphate + 5-amino-6-(D-ribitylamino)uracil = 6,7-dimethyl-8-(1-D-ribityl)lumazine + phosphate + 2 H2O + H(+). Its pathway is cofactor biosynthesis; riboflavin biosynthesis; riboflavin from 2-hydroxy-3-oxobutyl phosphate and 5-amino-6-(D-ribitylamino)uracil: step 1/2. In terms of biological role, catalyzes the formation of 6,7-dimethyl-8-ribityllumazine by condensation of 5-amino-6-(D-ribitylamino)uracil with 3,4-dihydroxy-2-butanone 4-phosphate. This is the penultimate step in the biosynthesis of riboflavin. The polypeptide is 6,7-dimethyl-8-ribityllumazine synthase (Pelodictyon phaeoclathratiforme (strain DSM 5477 / BU-1)).